Here is a 194-residue protein sequence, read N- to C-terminus: Sigma factor AlgU negative regulatory protein (194 aa).

A helical membrane pass occupies residues 89-105; it reads LAVAASVTLAVLAGVRL.

This sequence belongs to the RseA family.

The protein localises to the cell membrane. Its function is as follows. Negative regulator of the sigma factor AlgU. Plays a role in the differentiation of P.aeruginosa into the alginate-producing form. Inactivation of mucA causes a switch from the non-mucoid to mucoid state resulting in constitutive expression of alginate biosynthetic genes. This chain is Sigma factor AlgU negative regulatory protein (mucA), found in Pseudomonas aeruginosa (strain ATCC 15692 / DSM 22644 / CIP 104116 / JCM 14847 / LMG 12228 / 1C / PRS 101 / PAO1).